Reading from the N-terminus, the 715-residue chain is Bromodomain-containing protein DDB_G0278469 (715 aa).

2 disordered regions span residues 18–46 and 186–425; these read EDNN…NRNA and QQQK…ETKQ. 5 stretches are compositionally biased toward low complexity: residues 20-45, 186-204, 215-227, 234-254, and 261-281; these read NNNN…PNRN, QQQK…PTAQ, LTAA…TTTT, TAPP…TTKK, and SKSN…TTIT. Over residues 307–316 the composition is skewed to basic and acidic residues; the sequence is KPKEQKKDIM. Residues 322–368 are a coiled coil; that stretch reads SKKANTHEEKEEGESEEEEEEEEEEEEEEEEEEEEEQLEDKQKQTKT. Residues 332–359 show a composition bias toward acidic residues; it reads EEGESEEEEEEEEEEEEEEEEEEEEEQL. Residues 366 to 389 are compositionally biased toward polar residues; the sequence is TKTPISQNKSASSNIKPLSKTSKS. Over residues 405-414 the composition is skewed to low complexity; it reads KKITSTTVTR. A coiled-coil region spans residues 437–470; it reads KQQTQEEIEQELKLESIRKRIEQFINKFEKEIND. The Bromo domain maps to 474–599; that stretch reads KDLDEGKRKI…IQFYKSLLET (126 aa). The tract at residues 653–715 is disordered; it reads LVDEDEDECL…SEEEDQEATN (63 aa). Over residues 662 to 672 the composition is skewed to polar residues; it reads LNNQNNPTTYD. A compositionally biased stretch (acidic residues) spans 684–715; it reads QESDEESDEESDEESDEERDQLSEEEDQEATN.

The chain is Bromodomain-containing protein DDB_G0278469 from Dictyostelium discoideum (Social amoeba).